A 124-amino-acid polypeptide reads, in one-letter code: Large ribosomal subunit protein bL12 (124 aa).

Residues 101–115 (ALSKDDAEKAKKELE) show a composition bias toward basic and acidic residues. The segment at 101–124 (ALSKDDAEKAKKELEEAGATVELK) is disordered.

Belongs to the bacterial ribosomal protein bL12 family. As to quaternary structure, homodimer. Part of the ribosomal stalk of the 50S ribosomal subunit. Forms a multimeric L10(L12)X complex, where L10 forms an elongated spine to which 2 to 4 L12 dimers bind in a sequential fashion. Binds GTP-bound translation factors.

In terms of biological role, forms part of the ribosomal stalk which helps the ribosome interact with GTP-bound translation factors. Is thus essential for accurate translation. The polypeptide is Large ribosomal subunit protein bL12 (Hahella chejuensis (strain KCTC 2396)).